A 391-amino-acid polypeptide reads, in one-letter code: Formate-dependent phosphoribosylglycinamide formyltransferase (391 aa).

Residues 18 to 19 and glutamate 78 contribute to the N(1)-(5-phospho-beta-D-ribosyl)glycinamide site; that span reads EL. ATP-binding positions include arginine 110, lysine 151, 156 to 161, 191 to 194, and glutamate 199; these read SSGKGQ and EEFI. The 191-residue stretch at 115 to 305 folds into the ATP-grasp domain; sequence ELAHEELGIR…EFELHLRAIL (191 aa). Mg(2+) contacts are provided by glutamate 264 and glutamate 276. Residues aspartate 283, lysine 353, and 360-361 each bind N(1)-(5-phospho-beta-D-ribosyl)glycinamide; that span reads RR.

This sequence belongs to the PurK/PurT family. Homodimer.

The enzyme catalyses N(1)-(5-phospho-beta-D-ribosyl)glycinamide + formate + ATP = N(2)-formyl-N(1)-(5-phospho-beta-D-ribosyl)glycinamide + ADP + phosphate + H(+). It participates in purine metabolism; IMP biosynthesis via de novo pathway; N(2)-formyl-N(1)-(5-phospho-D-ribosyl)glycinamide from N(1)-(5-phospho-D-ribosyl)glycinamide (formate route): step 1/1. Involved in the de novo purine biosynthesis. Catalyzes the transfer of formate to 5-phospho-ribosyl-glycinamide (GAR), producing 5-phospho-ribosyl-N-formylglycinamide (FGAR). Formate is provided by PurU via hydrolysis of 10-formyl-tetrahydrofolate. This chain is Formate-dependent phosphoribosylglycinamide formyltransferase, found in Trichormus variabilis (strain ATCC 29413 / PCC 7937) (Anabaena variabilis).